Reading from the N-terminus, the 163-residue chain is uncharacterized protein (163 aa).

This sequence belongs to the LcrH/SycD chaperone family.

This is an uncharacterized protein from Escherichia coli (strain K12).